We begin with the raw amino-acid sequence, 323 residues long: Zinc finger C2HC domain-containing protein 1A (323 aa).

The C2HC/C3H-type 1 zinc-finger motif lies at 7–36 (ELRPCKICGRTFFPATLKKHVPICQKTSVK). Zn(2+) is bound by residues cysteine 11, cysteine 14, histidine 26, and cysteine 30. The segment at 35-75 (VKKRKTFESSRQRAEGTDINTVKPVKPRPEPPKKQSNWKRK) is disordered. The span at 40 to 50 (TFESSRQRAEG) shows a compositional bias: basic and acidic residues. The C2HC/C3H-type 2 zinc-finger motif lies at 110 to 139 (DYVQCPYCQRRFNQNAADRHINFCKEQSAR). Cysteine 114, cysteine 117, histidine 129, and cysteine 133 together coordinate Zn(2+). The tract at residues 138–273 (ARMGQKIKGG…EAAMGYDSSD (136 aa)) is disordered. The segment covering 208–226 (KYQTQSPAHKNSTMVTSPQ) has biased composition (polar residues).

This sequence belongs to the ZC2HC1 family. It depends on Zn(2+) as a cofactor.

This Xenopus laevis (African clawed frog) protein is Zinc finger C2HC domain-containing protein 1A (zc2hc1a).